The sequence spans 109 residues: uncharacterized protein (109 aa).

This is an uncharacterized protein from Enterobacteriaceae (Bacteriophage P2).